The sequence spans 435 residues: Glutamyl-tRNA reductase (435 aa).

Substrate-binding positions include 49–52 (TCNR), Ser-109, 114–116 (ETQ), and Gln-120. The active-site Nucleophile is Cys-50. 189-194 (GAGEMS) lines the NADP(+) pocket.

This sequence belongs to the glutamyl-tRNA reductase family. In terms of assembly, homodimer.

It carries out the reaction (S)-4-amino-5-oxopentanoate + tRNA(Glu) + NADP(+) = L-glutamyl-tRNA(Glu) + NADPH + H(+). It participates in porphyrin-containing compound metabolism; protoporphyrin-IX biosynthesis; 5-aminolevulinate from L-glutamyl-tRNA(Glu): step 1/2. In terms of biological role, catalyzes the NADPH-dependent reduction of glutamyl-tRNA(Glu) to glutamate 1-semialdehyde (GSA). The sequence is that of Glutamyl-tRNA reductase from Listeria innocua serovar 6a (strain ATCC BAA-680 / CLIP 11262).